A 255-amino-acid chain; its full sequence is Indole-3-glycerol phosphate synthase (255 aa).

This sequence belongs to the TrpC family.

The catalysed reaction is 1-(2-carboxyphenylamino)-1-deoxy-D-ribulose 5-phosphate + H(+) = (1S,2R)-1-C-(indol-3-yl)glycerol 3-phosphate + CO2 + H2O. Its pathway is amino-acid biosynthesis; L-tryptophan biosynthesis; L-tryptophan from chorismate: step 4/5. This is Indole-3-glycerol phosphate synthase from Shouchella clausii (strain KSM-K16) (Alkalihalobacillus clausii).